The primary structure comprises 305 residues: uncharacterized protein (305 aa).

It belongs to the IIV-6 436R family.

This is an uncharacterized protein from Acheta domesticus (House cricket).